Here is a 475-residue protein sequence, read N- to C-terminus: ATP synthase subunit beta, chloroplastic (475 aa).

155–162 (GGAGVGKT) is an ATP binding site.

It belongs to the ATPase alpha/beta chains family. In terms of assembly, F-type ATPases have 2 components, CF(1) - the catalytic core - and CF(0) - the membrane proton channel. CF(1) has five subunits: alpha(3), beta(3), gamma(1), delta(1), epsilon(1). CF(0) has four main subunits: a(1), b(1), b'(1) and c(9-12).

Its subcellular location is the plastid. It is found in the chloroplast thylakoid membrane. The enzyme catalyses ATP + H2O + 4 H(+)(in) = ADP + phosphate + 5 H(+)(out). Produces ATP from ADP in the presence of a proton gradient across the membrane. The catalytic sites are hosted primarily by the beta subunits. In Ochrosphaera neapolitana, this protein is ATP synthase subunit beta, chloroplastic.